We begin with the raw amino-acid sequence, 327 residues long: Phenylalanine--tRNA ligase alpha subunit (327 aa).

E252 serves as a coordination point for Mg(2+).

This sequence belongs to the class-II aminoacyl-tRNA synthetase family. Phe-tRNA synthetase alpha subunit type 1 subfamily. In terms of assembly, tetramer of two alpha and two beta subunits. It depends on Mg(2+) as a cofactor.

It is found in the cytoplasm. The enzyme catalyses tRNA(Phe) + L-phenylalanine + ATP = L-phenylalanyl-tRNA(Phe) + AMP + diphosphate + H(+). This is Phenylalanine--tRNA ligase alpha subunit from Shewanella denitrificans (strain OS217 / ATCC BAA-1090 / DSM 15013).